Consider the following 56-residue polypeptide: Venom peptide 5 (56 aa).

The signal sequence occupies residues 1–26 (MKTASFILSFVVLLIVIITWIGEVSA). Positions 27–42 (VSEPEPVAKATAHAAA) are excised as a propeptide. Cysteines 49 and 54 form a disulfide.

Post-translationally, probably contains 1 disulfide bond, which may be crucial for activity, since the linear peptide without disulfide bond is inactive. As to expression, expressed by the venom gland.

It localises to the secreted. The polypeptide is Venom peptide 5 (Eumenes pomiformis (Potter wasp)).